The chain runs to 408 residues: Imidazolonepropionase (408 aa).

Fe(3+) is bound by residues His-73 and His-75. Residues His-73 and His-75 each contribute to the Zn(2+) site. Residues Arg-82, Tyr-145, and His-178 each coordinate 4-imidazolone-5-propanoate. Tyr-145 is an N-formimidoyl-L-glutamate binding site. His-243 contacts Fe(3+). Residue His-243 participates in Zn(2+) binding. Residue Gln-246 participates in 4-imidazolone-5-propanoate binding. Position 318 (Asp-318) interacts with Fe(3+). Residue Asp-318 coordinates Zn(2+). N-formimidoyl-L-glutamate-binding residues include Asn-320 and Gly-322. Residue Ser-323 participates in 4-imidazolone-5-propanoate binding.

Belongs to the metallo-dependent hydrolases superfamily. HutI family. The cofactor is Zn(2+). Fe(3+) serves as cofactor.

The protein localises to the cytoplasm. It carries out the reaction 4-imidazolone-5-propanoate + H2O = N-formimidoyl-L-glutamate. Its pathway is amino-acid degradation; L-histidine degradation into L-glutamate; N-formimidoyl-L-glutamate from L-histidine: step 3/3. Functionally, catalyzes the hydrolytic cleavage of the carbon-nitrogen bond in imidazolone-5-propanoate to yield N-formimidoyl-L-glutamate. It is the third step in the universal histidine degradation pathway. In Shewanella baltica (strain OS155 / ATCC BAA-1091), this protein is Imidazolonepropionase.